We begin with the raw amino-acid sequence, 218 residues long: Cytochrome P450 3A19 (218 aa).

A heme-binding site is contributed by cysteine 153.

This sequence belongs to the cytochrome P450 family. It depends on heme as a cofactor.

The protein localises to the endoplasmic reticulum membrane. The protein resides in the microsome membrane. It catalyses the reaction an organic molecule + reduced [NADPH--hemoprotein reductase] + O2 = an alcohol + oxidized [NADPH--hemoprotein reductase] + H2O + H(+). Functionally, cytochromes P450 are a group of heme-thiolate monooxygenases. In liver microsomes, this enzyme is involved in an NADPH-dependent electron transport pathway. It oxidizes a variety of structurally unrelated compounds, including steroids, fatty acids, and xenobiotics. The polypeptide is Cytochrome P450 3A19 (CYP3A19) (Capra hircus aegagrus (Wild goat)).